Consider the following 449-residue polypeptide: Trigger factor (449 aa).

One can recognise a PPIase FKBP-type domain in the interval 162-242 (GDFVTIDMTV…VRAVREKQVP (81 aa)). Residues 428-449 (APVNLEGGSTPAAEAEPAVSEA) form a disordered region. Low complexity predominate over residues 438 to 449 (PAAEAEPAVSEA).

The protein belongs to the FKBP-type PPIase family. Tig subfamily.

It localises to the cytoplasm. The catalysed reaction is [protein]-peptidylproline (omega=180) = [protein]-peptidylproline (omega=0). Involved in protein export. Acts as a chaperone by maintaining the newly synthesized protein in an open conformation. Functions as a peptidyl-prolyl cis-trans isomerase. In Acidothermus cellulolyticus (strain ATCC 43068 / DSM 8971 / 11B), this protein is Trigger factor.